Consider the following 382-residue polypeptide: Dual-specificity RNA methyltransferase RlmN (382 aa).

Residue Glu-94 is the Proton acceptor of the active site. A Radical SAM core domain is found at 100 to 336 (EANRGTLCVS…NTITRKTRGD (237 aa)). Cys-107 and Cys-342 form a disulfide bridge. Residues Cys-114, Cys-118, and Cys-121 each contribute to the [4Fe-4S] cluster site. S-adenosyl-L-methionine contacts are provided by residues 168–169 (GE), Ser-200, 222–224 (SLH), and Asn-299. Catalysis depends on Cys-342, which acts as the S-methylcysteine intermediate.

It belongs to the radical SAM superfamily. RlmN family. The cofactor is [4Fe-4S] cluster.

It localises to the cytoplasm. The enzyme catalyses adenosine(2503) in 23S rRNA + 2 reduced [2Fe-2S]-[ferredoxin] + 2 S-adenosyl-L-methionine = 2-methyladenosine(2503) in 23S rRNA + 5'-deoxyadenosine + L-methionine + 2 oxidized [2Fe-2S]-[ferredoxin] + S-adenosyl-L-homocysteine. It catalyses the reaction adenosine(37) in tRNA + 2 reduced [2Fe-2S]-[ferredoxin] + 2 S-adenosyl-L-methionine = 2-methyladenosine(37) in tRNA + 5'-deoxyadenosine + L-methionine + 2 oxidized [2Fe-2S]-[ferredoxin] + S-adenosyl-L-homocysteine. Specifically methylates position 2 of adenine 2503 in 23S rRNA and position 2 of adenine 37 in tRNAs. m2A2503 modification seems to play a crucial role in the proofreading step occurring at the peptidyl transferase center and thus would serve to optimize ribosomal fidelity. The protein is Dual-specificity RNA methyltransferase RlmN of Legionella pneumophila (strain Paris).